The primary structure comprises 478 residues: UDP-N-acetylmuramate--L-alanine ligase (478 aa).

ATP is bound at residue 126–132; it reads GTHGKTT.

Belongs to the MurCDEF family.

Its subcellular location is the cytoplasm. The enzyme catalyses UDP-N-acetyl-alpha-D-muramate + L-alanine + ATP = UDP-N-acetyl-alpha-D-muramoyl-L-alanine + ADP + phosphate + H(+). It participates in cell wall biogenesis; peptidoglycan biosynthesis. Cell wall formation. The chain is UDP-N-acetylmuramate--L-alanine ligase from Mycolicibacterium vanbaalenii (strain DSM 7251 / JCM 13017 / BCRC 16820 / KCTC 9966 / NRRL B-24157 / PYR-1) (Mycobacterium vanbaalenii).